We begin with the raw amino-acid sequence, 709 residues long: Putative extracellular sulfatase Sulf-1 homolog (709 aa).

The N-terminal stretch at 1–27 (MISNLRISNYFIIFYVLFLIIPIKVTS) is a signal peptide. The Ca(2+) site is built by Asp43, Asp44, and Cys79. Cys79 (nucleophile) is an active-site residue. 3-oxoalanine (Cys) is present on Cys79. Asn103, Asn162, and Asn189 each carry an N-linked (GlcNAc...) asparagine glycan. The Ca(2+) site is built by Asp308 and His309. Asn344, Asn468, Asn500, Asn540, Asn566, Asn610, and Asn620 each carry an N-linked (GlcNAc...) asparagine glycan.

This sequence belongs to the sulfatase family. Ca(2+) serves as cofactor. Post-translationally, the conversion to 3-oxoalanine (also known as C-formylglycine, FGly), of a serine or cysteine residue in prokaryotes and of a cysteine residue in eukaryotes, is critical for catalytic activity.

The protein localises to the endoplasmic reticulum. It is found in the golgi apparatus. It localises to the golgi stack. The protein resides in the cell surface. This chain is Putative extracellular sulfatase Sulf-1 homolog (sul-1), found in Caenorhabditis elegans.